Consider the following 223-residue polypeptide: Deoxyribose-phosphate aldolase (223 aa).

Asp89 (proton donor/acceptor) is an active-site residue. The Schiff-base intermediate with acetaldehyde role is filled by Lys152. Lys181 functions as the Proton donor/acceptor in the catalytic mechanism.

Belongs to the DeoC/FbaB aldolase family. DeoC type 1 subfamily.

Its subcellular location is the cytoplasm. It catalyses the reaction 2-deoxy-D-ribose 5-phosphate = D-glyceraldehyde 3-phosphate + acetaldehyde. It functions in the pathway carbohydrate degradation; 2-deoxy-D-ribose 1-phosphate degradation; D-glyceraldehyde 3-phosphate and acetaldehyde from 2-deoxy-alpha-D-ribose 1-phosphate: step 2/2. Catalyzes a reversible aldol reaction between acetaldehyde and D-glyceraldehyde 3-phosphate to generate 2-deoxy-D-ribose 5-phosphate. The protein is Deoxyribose-phosphate aldolase of Listeria monocytogenes serotype 4b (strain CLIP80459).